Here is a 254-residue protein sequence, read N- to C-terminus: UPF0246 protein lpp1320 (254 aa).

The protein belongs to the UPF0246 family.

The chain is UPF0246 protein lpp1320 from Legionella pneumophila (strain Paris).